Consider the following 817-residue polypeptide: Leucine--tRNA ligase (817 aa).

The 'HIGH' region signature appears at 42–52 (PYPSGKLHMGH). Residues 576 to 580 (KMSKS) carry the 'KMSKS' region motif. An ATP-binding site is contributed by Lys-579.

Belongs to the class-I aminoacyl-tRNA synthetase family.

The protein localises to the cytoplasm. The catalysed reaction is tRNA(Leu) + L-leucine + ATP = L-leucyl-tRNA(Leu) + AMP + diphosphate. This Methylobacillus flagellatus (strain ATCC 51484 / DSM 6875 / VKM B-1610 / KT) protein is Leucine--tRNA ligase.